A 212-amino-acid chain; its full sequence is Ion-translocating oxidoreductase complex subunit G (212 aa).

The chain crosses the membrane as a helical span at residues 9–29 (GFLLALFALICTGLVAAVNQQ). Thr176 is modified (FMN phosphoryl threonine).

The protein belongs to the RnfG family. The complex is composed of six subunits: RnfA, RnfB, RnfC, RnfD, RnfE and RnfG. Requires FMN as cofactor.

It localises to the cell inner membrane. Functionally, part of a membrane-bound complex that couples electron transfer with translocation of ions across the membrane. This chain is Ion-translocating oxidoreductase complex subunit G, found in Shewanella baltica (strain OS223).